Consider the following 143-residue polypeptide: Large ribosomal subunit protein uL11 (143 aa).

The protein belongs to the universal ribosomal protein uL11 family. Part of the ribosomal stalk of the 50S ribosomal subunit. Interacts with L10 and the large rRNA to form the base of the stalk. L10 forms an elongated spine to which L12 dimers bind in a sequential fashion forming a multimeric L10(L12)X complex. Post-translationally, one or more lysine residues are methylated.

Functionally, forms part of the ribosomal stalk which helps the ribosome interact with GTP-bound translation factors. The polypeptide is Large ribosomal subunit protein uL11 (Pseudomonas fluorescens (strain Pf0-1)).